A 346-amino-acid chain; its full sequence is Dihydroorotate dehydrogenase (quinone) (346 aa).

FMN is bound by residues 62 to 66 (AGMDK) and Thr86. Lys66 contributes to the substrate binding site. 111-115 (NRMGF) is a substrate binding site. 2 residues coordinate FMN: Asn142 and Asn175. Asn175 is a substrate binding site. The active-site Nucleophile is Ser178. Position 180 (Asn180) interacts with substrate. The FMN site is built by Lys211 and Val239. Substrate is bound at residue 240–241 (NT). FMN-binding positions include Gly261, Gly289, and 310–311 (YT).

The protein belongs to the dihydroorotate dehydrogenase family. Type 2 subfamily. In terms of assembly, monomer. It depends on FMN as a cofactor.

The protein resides in the cell membrane. The catalysed reaction is (S)-dihydroorotate + a quinone = orotate + a quinol. It participates in pyrimidine metabolism; UMP biosynthesis via de novo pathway; orotate from (S)-dihydroorotate (quinone route): step 1/1. Catalyzes the conversion of dihydroorotate to orotate with quinone as electron acceptor. The polypeptide is Dihydroorotate dehydrogenase (quinone) (Thermus thermophilus (strain ATCC 27634 / DSM 579 / HB8)).